A 424-amino-acid polypeptide reads, in one-letter code: Gamma-glutamyl phosphate reductase (424 aa).

Belongs to the gamma-glutamyl phosphate reductase family.

The protein resides in the cytoplasm. The catalysed reaction is L-glutamate 5-semialdehyde + phosphate + NADP(+) = L-glutamyl 5-phosphate + NADPH + H(+). It participates in amino-acid biosynthesis; L-proline biosynthesis; L-glutamate 5-semialdehyde from L-glutamate: step 2/2. Catalyzes the NADPH-dependent reduction of L-glutamate 5-phosphate into L-glutamate 5-semialdehyde and phosphate. The product spontaneously undergoes cyclization to form 1-pyrroline-5-carboxylate. This is Gamma-glutamyl phosphate reductase from Dehalococcoides mccartyi (strain CBDB1).